The sequence spans 529 residues: GTPase Obg (529 aa).

One can recognise an Obg domain in the interval 2–159; that stretch reads ASFVDRVVLH…SDIVLELKSI (158 aa). An OBG-type G domain is found at 160-343; that stretch reads ADIALVGFPS…LGFAMAEIVK (184 aa). GTP-binding positions include 166–173, 191–195, 212–215, 295–298, and 324–326; these read GFPSAGKS, FTTLI, DVPG, NKVD, and SAT. The Mg(2+) site is built by Ser-173 and Thr-193. In terms of domain architecture, OCT spans 363–447; sequence PRAVNEAGFK…DDGVVFDWEP (85 aa). Over residues 466–502 the composition is skewed to basic and acidic residues; it reads FADIGDRPTRGQKRDEQQERRDAKAAARAELEAERKA. The segment at 466–529 is disordered; it reads FADIGDRPTR…ESGLTTENEE (64 aa).

It belongs to the TRAFAC class OBG-HflX-like GTPase superfamily. OBG GTPase family. As to quaternary structure, monomer. It depends on Mg(2+) as a cofactor.

It localises to the cytoplasm. Functionally, an essential GTPase which binds GTP, GDP and possibly (p)ppGpp with moderate affinity, with high nucleotide exchange rates and a fairly low GTP hydrolysis rate. Plays a role in control of the cell cycle, stress response, ribosome biogenesis and in those bacteria that undergo differentiation, in morphogenesis control. In Arthrobacter sp. (strain FB24), this protein is GTPase Obg.